Consider the following 300-residue polypeptide: Protease HtpX (300 aa).

The next 2 membrane-spanning stretches (helical) occupy residues 4–24 (ILLFLATNLAVVLVASITLRL) and 40–60 (SLLIFCFVIGMAGSLVSLFIS). His-145 contributes to the Zn(2+) binding site. Glu-146 is a catalytic residue. His-149 lines the Zn(2+) pocket. 2 helical membrane-spanning segments follow: residues 153-173 (GDMVTLALIQGVLNTFVMFFA) and 193-213 (LGFFGYMAVVIVAEIVFGLVA). Zn(2+) is bound at residue Glu-225.

It belongs to the peptidase M48B family. The cofactor is Zn(2+).

The protein resides in the cell inner membrane. This chain is Protease HtpX, found in Chromohalobacter salexigens (strain ATCC BAA-138 / DSM 3043 / CIP 106854 / NCIMB 13768 / 1H11).